The sequence spans 147 residues: Hemoglobin subunit beta-A/B (147 aa).

Positions 2–147 (EWTDAERSAI…VVNALKRQYH (146 aa)) constitute a Globin domain. Heme b-binding residues include histidine 63 and histidine 92.

The protein belongs to the globin family. Heterotetramer of two alpha chains and two beta chains. As to expression, red blood cells.

Functionally, involved in oxygen transport from gills to the various peripheral tissues. In Cyprinus carpio (Common carp), this protein is Hemoglobin subunit beta-A/B.